The sequence spans 455 residues: Gamma-glutamyl phosphate reductase (455 aa).

It belongs to the gamma-glutamyl phosphate reductase family.

The protein resides in the cytoplasm. It catalyses the reaction L-glutamate 5-semialdehyde + phosphate + NADP(+) = L-glutamyl 5-phosphate + NADPH + H(+). It functions in the pathway amino-acid biosynthesis; L-proline biosynthesis; L-glutamate 5-semialdehyde from L-glutamate: step 2/2. Catalyzes the NADPH-dependent reduction of L-glutamate 5-phosphate into L-glutamate 5-semialdehyde and phosphate. The product spontaneously undergoes cyclization to form 1-pyrroline-5-carboxylate. The protein is Gamma-glutamyl phosphate reductase of Synechococcus sp. (strain JA-2-3B'a(2-13)) (Cyanobacteria bacterium Yellowstone B-Prime).